The chain runs to 493 residues: Galactose-1-phosphate uridylyltransferase (493 aa).

The protein belongs to the galactose-1-phosphate uridylyltransferase type 2 family.

It is found in the cytoplasm. It carries out the reaction alpha-D-galactose 1-phosphate + UDP-alpha-D-glucose = alpha-D-glucose 1-phosphate + UDP-alpha-D-galactose. It functions in the pathway carbohydrate metabolism; galactose metabolism. The sequence is that of Galactose-1-phosphate uridylyltransferase from Streptococcus pneumoniae (strain CGSP14).